The following is a 1639-amino-acid chain: Mediator of RNA polymerase II transcription subunit 14 (1639 aa).

An LXXLL motif 1 motif is present at residues 49–53 (LAELL). Disordered regions lie at residues 561-586 (GQSP…GSDS) and 709-755 (LPQP…KTVH). The segment covering 575–586 (SAAGGPAPGSDS) has biased composition (low complexity). The segment covering 711-721 (QPKPPQAPPTP) has biased composition (pro residues). A compositionally biased stretch (low complexity) spans 722–748 (QQQQQQQQQQQQPGTSDAKSSGAGASA). The LXXLL motif 2 signature appears at 768–772 (LKRLL). 2 disordered regions span residues 1039-1243 (RRSQ…HHYT) and 1558-1639 (MQPG…GGPN). Gly residues-rich tracts occupy residues 1062–1088 (GNNG…GTGM) and 1122–1142 (IGGG…GQGG). A compositionally biased stretch (polar residues) spans 1189–1201 (GPSSLSYMQSHTD). The segment covering 1219 to 1229 (PGMPRPSPRPG) has biased composition (pro residues). Over residues 1558-1579 (MQPGGGPGVPGGPGGPMGGQIG) the composition is skewed to gly residues. The span at 1589–1603 (VGSSPSPMMHSPMQQ) shows a compositional bias: low complexity. Positions 1604–1639 (MGGGGPQPGAYGGMVGGPGGGPQSGGPVGGGPGGPN) are enriched in gly residues.

It belongs to the Mediator complex subunit 14 family. Component of the Mediator complex.

The protein localises to the nucleus. Its function is as follows. Component of the Mediator complex, a coactivator involved in the regulated transcription of nearly all RNA polymerase II-dependent genes. Mediator functions as a bridge to convey information from gene-specific regulatory proteins to the basal RNA polymerase II transcription machinery. Mediator is recruited to promoters by direct interactions with regulatory proteins and serves as a scaffold for the assembly of a functional preinitiation complex with RNA polymerase II and the general transcription factors. The chain is Mediator of RNA polymerase II transcription subunit 14 (MED14) from Anopheles gambiae (African malaria mosquito).